The primary structure comprises 419 residues: Histidine--tRNA ligase (419 aa).

This sequence belongs to the class-II aminoacyl-tRNA synthetase family. In terms of assembly, homodimer.

Its subcellular location is the cytoplasm. The enzyme catalyses tRNA(His) + L-histidine + ATP = L-histidyl-tRNA(His) + AMP + diphosphate + H(+). The sequence is that of Histidine--tRNA ligase from Thiobacillus denitrificans (strain ATCC 25259 / T1).